The sequence spans 61 residues: Small ribosomal subunit protein eS30A (61 aa).

Positions 1 to 36 (MGKVHGSLARAGKVKSQTPKVEKQEKPKQPKGRAYK) are disordered.

The protein belongs to the eukaryotic ribosomal protein eS30 family. In terms of assembly, component of the small ribosomal subunit (SSU). Mature yeast ribosomes consist of a small (40S) and a large (60S) subunit. The 40S small subunit contains 1 molecule of ribosomal RNA (18S rRNA) and at least 33 different proteins. The large 60S subunit contains 3 rRNA molecules (25S, 5.8S and 5S rRNA) and at least 46 different proteins.

It is found in the cytoplasm. The protein resides in the nucleus. Its function is as follows. Component of the ribosome, a large ribonucleoprotein complex responsible for the synthesis of proteins in the cell. The small ribosomal subunit (SSU) binds messenger RNAs (mRNAs) and translates the encoded message by selecting cognate aminoacyl-transfer RNA (tRNA) molecules. The large subunit (LSU) contains the ribosomal catalytic site termed the peptidyl transferase center (PTC), which catalyzes the formation of peptide bonds, thereby polymerizing the amino acids delivered by tRNAs into a polypeptide chain. The nascent polypeptides leave the ribosome through a tunnel in the LSU and interact with protein factors that function in enzymatic processing, targeting, and the membrane insertion of nascent chains at the exit of the ribosomal tunnel. The polypeptide is Small ribosomal subunit protein eS30A (rps3001) (Schizosaccharomyces pombe (strain 972 / ATCC 24843) (Fission yeast)).